A 506-amino-acid polypeptide reads, in one-letter code: ATP synthase subunit alpha, plastid (506 aa).

170-177 (GDRQTGKT) contacts ATP.

The protein belongs to the ATPase alpha/beta chains family. F-type ATPases have 2 components, CF(1) - the catalytic core - and CF(0) - the membrane proton channel. CF(1) has five subunits: alpha(3), beta(3), gamma(1), delta(1), epsilon(1). CF(0) has four main subunits: a, b, b' and c.

Its subcellular location is the plastid membrane. The enzyme catalyses ATP + H2O + 4 H(+)(in) = ADP + phosphate + 5 H(+)(out). Functionally, produces ATP from ADP in the presence of a proton gradient across the membrane. The alpha chain is a regulatory subunit. The sequence is that of ATP synthase subunit alpha, plastid from Prototheca wickerhamii.